The sequence spans 732 residues: Small conductance calcium-activated potassium channel protein 3 (732 aa).

Residues 1–11 (MDTSGHFHDSG) show a composition bias toward basic and acidic residues. Disordered regions lie at residues 1-82 (MDTS…QQAP) and 103-162 (HSSP…ASPL). Residues 35-59 (QPPPPSAPPAVPQQPPGPLLQPQPP) are compositionally biased toward pro residues. A compositionally biased stretch (low complexity) spans 60 to 82 (QLQQQQQQQQQQQQQQQQQQQAP). Residues 113-133 (NSANSTAILHPSSRQGSQLNL) are compositionally biased toward polar residues. Residues 139–148 (GHSPSSTATS) are compositionally biased toward low complexity. Ser168 carries the post-translational modification Phosphoserine. Polar residues predominate over residues 241 to 257 (THNHQHAGTTAGSTTFP). The segment at 241-260 (THNHQHAGTTAGSTTFPKAN) is disordered. The chain crosses the membrane as a helical span at residues 289-309 (LIFGMFGIVVMVIETELSWGL). The helical transmembrane segment at 316 to 336 (FSLALKCLISLSTIILLGLII) threads the bilayer. The chain crosses the membrane as a helical span at residues 367–387 (ISLEMLVCAIHPIPGEYKFFW). A helical transmembrane segment spans residues 406 to 426 (IILSIPMFLRLYLIARVMLLH). Residues 455 to 475 (LMTICPGTVLLVFSISLWIIA) form a helical membrane-spanning segment. Residues 495–515 (FLGAMWLISITFLSIGYGDMV) constitute an intramembrane region (pore-forming). A helical transmembrane segment spans residues 524–544 (VCLLTGIMGAGCTALVVAVVA). The calmodulin-binding stretch occupies residues 562-638 (DTQLTKRIKN…LVDLSKMQNV (77 aa)). Residues 643 to 670 (ITELNDRSEDLEKQIGSLESKLEHLTAS) are a coiled coil. The disordered stretch occupies residues 704 to 732 (GTSHAPPSDSPIGISSTSFPTPYTSSSSC). Residues 718 to 732 (SSTSFPTPYTSSSSC) are compositionally biased toward low complexity.

This sequence belongs to the potassium channel KCNN family. KCa2.3/KCNN3 subfamily. In terms of assembly, homodimer. Heteromultimer with KCNN2 or KCNN1; this modulates plasma membrane expression and consequently the small conductance calcium-activated potassium channel activity. The complex is composed of 4 channel subunits each of which binds to a calmodulin subunit which regulates the channel activity through calcium-binding. Interacts with CALM1.

It localises to the cell membrane. Its subcellular location is the cytoplasm. It is found in the myofibril. The protein resides in the sarcomere. The protein localises to the z line. It catalyses the reaction K(+)(in) = K(+)(out). With respect to regulation, inhibited by bee venom neurotoxin apamin. In terms of biological role, small conductance calcium-activated potassium channel that mediates the voltage-independent transmembrane transfer of potassium across the cell membrane through a constitutive interaction with calmodulin which binds the intracellular calcium allowing its opening. The current is characterized by a voltage-independent activation, an intracellular calcium concentration increase-dependent activation and a single-channel conductance of 10 picosiemens. Also presents an inwardly rectifying current, thus reducing its already small outward conductance of potassium ions, which is particularly the case when the membrane potential displays positive values, above + 20 mV. Activation is followed by membrane hyperpolarization. Thought to regulate neuronal excitability by contributing to the slow component of synaptic afterhyperpolarization. The sequence is that of Small conductance calcium-activated potassium channel protein 3 from Rattus norvegicus (Rat).